The following is a 559-amino-acid chain: MAAQGFLLNASFLLILLVLAKPLGSGLARLIAAVPLPGVAGVERILWRTLGITDHEMNWRQYLLALLTLNLLGLGILFCLLFWQEWLPLNPQRLPGLSWDLALNTAVSFVTNTNWQAYSGESTLSYFSQMAGLTVQNFLSAATGIAVVFALIRAFTRQNVHTLGNAWQDLVRITLWILFPVALIIALFFIQQGVPQNLSAYQPITTLEGAKQLLPMGPVASQEAIKMLGTNGGGFFNANSSHPFENPTVLTNLAQMLAIFLIPAALCFAFGEAAGDRRQGRALLWAMSFIFVVCVAVVMWAEVQGNPHLLAAGADSSVNMEGKETRFGVLASSLFAVVTTAASCGAVNAMHDSFTALGGMVPMWLMQIGEVVFGGVGSGLYGMLLFVLLAVFIAGLMIGRTPEYLGKKIDVHEMKMTALAILVTPMLVLLGSALAMMTDAGRSAMLNPGPHGFSEVLYAVSSAANNNGSAFAGLSANSPFWNCLLAFCMFVGRFGVIIPVMAIAGSLVSKKVQPASQGTLATHGALFIGLLIGTVLLVGALTFIPALALGPVAEHFSLP.

13 helical membrane passes run 5–25 (GFLL…PLGS), 27–47 (LARL…RILW), 63–83 (LLAL…LLFW), 132–152 (GLTV…FALI), 170–190 (LVRI…LFFI), 253–273 (LAQM…FGEA), 283–303 (LLWA…WAEV), 327–347 (FGVL…CGAV), 356–376 (ALGG…FGGV), 379–399 (GLYG…LMIG), 416–436 (MTAL…ALAM), 484–504 (LLAF…MAIA), and 524–544 (GALF…LTFI).

It belongs to the KdpA family. The system is composed of three essential subunits: KdpA, KdpB and KdpC.

It localises to the cell inner membrane. In terms of biological role, part of the high-affinity ATP-driven potassium transport (or Kdp) system, which catalyzes the hydrolysis of ATP coupled with the electrogenic transport of potassium into the cytoplasm. This subunit binds the periplasmic potassium ions and delivers the ions to the membrane domain of KdpB through an intramembrane tunnel. The polypeptide is Potassium-transporting ATPase potassium-binding subunit (Salmonella newport (strain SL254)).